The chain runs to 156 residues: ATP synthase subunit b (156 aa).

A helical transmembrane segment spans residues 7–27 (LIGQTVAFIIFVWFCMKFVWP).

It belongs to the ATPase B chain family. As to quaternary structure, F-type ATPases have 2 components, F(1) - the catalytic core - and F(0) - the membrane proton channel. F(1) has five subunits: alpha(3), beta(3), gamma(1), delta(1), epsilon(1). F(0) has three main subunits: a(1), b(2) and c(10-14). The alpha and beta chains form an alternating ring which encloses part of the gamma chain. F(1) is attached to F(0) by a central stalk formed by the gamma and epsilon chains, while a peripheral stalk is formed by the delta and b chains.

It is found in the cell inner membrane. F(1)F(0) ATP synthase produces ATP from ADP in the presence of a proton or sodium gradient. F-type ATPases consist of two structural domains, F(1) containing the extramembraneous catalytic core and F(0) containing the membrane proton channel, linked together by a central stalk and a peripheral stalk. During catalysis, ATP synthesis in the catalytic domain of F(1) is coupled via a rotary mechanism of the central stalk subunits to proton translocation. Functionally, component of the F(0) channel, it forms part of the peripheral stalk, linking F(1) to F(0). The sequence is that of ATP synthase subunit b from Shewanella sp. (strain ANA-3).